A 246-amino-acid polypeptide reads, in one-letter code: Probable transcriptional regulatory protein ACP_0521 (246 aa).

The protein belongs to the TACO1 family.

It localises to the cytoplasm. The sequence is that of Probable transcriptional regulatory protein ACP_0521 from Acidobacterium capsulatum (strain ATCC 51196 / DSM 11244 / BCRC 80197 / JCM 7670 / NBRC 15755 / NCIMB 13165 / 161).